The sequence spans 246 residues: 1-(5-phosphoribosyl)-5-[(5-phosphoribosylamino)methylideneamino] imidazole-4-carboxamide isomerase (246 aa).

Catalysis depends on D8, which acts as the Proton acceptor. D131 serves as the catalytic Proton donor.

Belongs to the HisA/HisF family.

The protein localises to the cytoplasm. The catalysed reaction is 1-(5-phospho-beta-D-ribosyl)-5-[(5-phospho-beta-D-ribosylamino)methylideneamino]imidazole-4-carboxamide = 5-[(5-phospho-1-deoxy-D-ribulos-1-ylimino)methylamino]-1-(5-phospho-beta-D-ribosyl)imidazole-4-carboxamide. The protein operates within amino-acid biosynthesis; L-histidine biosynthesis; L-histidine from 5-phospho-alpha-D-ribose 1-diphosphate: step 4/9. The polypeptide is 1-(5-phosphoribosyl)-5-[(5-phosphoribosylamino)methylideneamino] imidazole-4-carboxamide isomerase (Bordetella bronchiseptica (strain ATCC BAA-588 / NCTC 13252 / RB50) (Alcaligenes bronchisepticus)).